The chain runs to 214 residues: MSNEFLLNAESRSDTGKGASRRLRRLQERVPGILYGGEAEPQMISVELRELKKALENEAFYSHILTLKLDGADVQAVLRDMQRHPAKGHPLHVDLLRVDKTHKITMSVPLHFTNEESSIGVKKQGGEIQHNFAEVEVSCLPQHLPEFIEVDMANAELDSVVHLSDLKLPKGVELTQLALGEDHDQPVAAVHQPKVRASSDDDDAAEGEEAASEE.

Disordered stretches follow at residues M1–L23 and D182–E214. A compositionally biased stretch (acidic residues) spans D200–E214.

This sequence belongs to the bacterial ribosomal protein bL25 family. CTC subfamily. As to quaternary structure, part of the 50S ribosomal subunit; part of the 5S rRNA/L5/L18/L25 subcomplex. Contacts the 5S rRNA. Binds to the 5S rRNA independently of L5 and L18.

Functionally, this is one of the proteins that binds to the 5S RNA in the ribosome where it forms part of the central protuberance. The sequence is that of Large ribosomal subunit protein bL25 from Alcanivorax borkumensis (strain ATCC 700651 / DSM 11573 / NCIMB 13689 / SK2).